The primary structure comprises 59 residues: Large ribosomal subunit protein uL30 (59 aa).

The protein belongs to the universal ribosomal protein uL30 family. Part of the 50S ribosomal subunit.

The protein is Large ribosomal subunit protein uL30 of Photorhabdus laumondii subsp. laumondii (strain DSM 15139 / CIP 105565 / TT01) (Photorhabdus luminescens subsp. laumondii).